We begin with the raw amino-acid sequence, 37 residues long: Tick defensin 2 (37 aa).

3 disulfide bridges follow: cysteine 4-cysteine 26, cysteine 11-cysteine 34, and cysteine 15-cysteine 36.

It belongs to the invertebrate defensin family.

It is found in the secreted. Antibacterial peptide mostly active against Gram-positive bacteria (MIC=0.24 ug/ml on Bacillus subtilis, and MIC=0.94 ug/ml on Micrococcus luteus, MIC&gt;120 ug/ml on both Escherichia coli and Pseudomonas aeruginosa). This chain is Tick defensin 2, found in Ornithodoros savignyi (African eyed tampan).